The chain runs to 1044 residues: Spindle assembly checkpoint serine/threonine-protein kinase bub1 (1044 aa).

Positions 36–204 (FQEELDIIEE…SSPFPPPRIV (169 aa)) constitute a BUB1 N-terminal domain. Disordered stretches follow at residues 209–259 (PVSS…PLLY), 317–343 (VHHD…TPTR), 404–446 (ESLE…SQEE), 484–555 (KNSN…DSNS), and 685–705 (IKPK…SLDG). Positions 223 to 239 (QVFSDASSSRDSQNASD) are enriched in polar residues. A compositionally biased stretch (polar residues) spans 430–442 (NSSNSGATSLTGR). Residues 504–518 (STLQEETATGTTSTT) show a composition bias toward low complexity. The segment covering 544–555 (RSPQYSTVDSNS) has biased composition (polar residues). Residue T550 is modified to Phosphothreonine. In terms of domain architecture, Protein kinase spans 718–1044 (LSVISKLGQG…LLKSIEKRKI (327 aa)). Residues A728, F729, A730, K762, and D809 each contribute to the ATP site. The Proton acceptor role is filled by D861. ATP-binding residues include D865, N866, and D900.

The protein belongs to the protein kinase superfamily. Ser/Thr protein kinase family. BUB1 subfamily. As to quaternary structure, part of the BUB1-BUB3 complex, composed of bub1 and bub3. Interacts with spc7 (when phosphorylated on MELT motifs); to recruit the bub1-bub3 complex to kinetochores. Interacts with mad3. In terms of processing, autophosphorylated.

Its subcellular location is the nucleus. The protein resides in the chromosome. The protein localises to the centromere. It is found in the kinetochore. The enzyme catalyses L-seryl-[protein] + ATP = O-phospho-L-seryl-[protein] + ADP + H(+). It carries out the reaction L-threonyl-[protein] + ATP = O-phospho-L-threonyl-[protein] + ADP + H(+). In terms of biological role, involved in mitotic spindle assembly checkpoint signaling, a process that delays anaphase until chromosomes are bioriented on the spindle, and in the repair of incorrect mitotic kinetochore-spindle microtubule attachments. Acts as a kinetochore scaffold for the recruitment of other spindle assembly checkpoint components. In Schizosaccharomyces pombe (strain 972 / ATCC 24843) (Fission yeast), this protein is Spindle assembly checkpoint serine/threonine-protein kinase bub1.